Consider the following 473-residue polypeptide: Levansucrase (473 aa).

An N-terminal signal peptide occupies residues 1–29; the sequence is MNIKKFAKQATVLTFTTALLAGGATQAFA. Sucrose is bound by residues W85, D86, and S164. The Nucleophile role is filled by D86. Position 241 (D241) interacts with Ca(2+). The sucrose site is built by R246 and D247. Residues Q272, L308, N310, and D339 each coordinate Ca(2+). E340 is a sucrose binding site. Catalysis depends on E342, which acts as the Proton donor/acceptor. R360 serves as a coordination point for sucrose.

Belongs to the glycosyl hydrolase 68 family. Monomer.

The protein resides in the secreted. It carries out the reaction [6)-beta-D-fructofuranosyl-(2-&gt;](n) alpha-D-glucopyranoside + sucrose = [6)-beta-D-fructofuranosyl-(2-&gt;](n+1) alpha-D-glucopyranoside + D-glucose. Its activity is regulated as follows. Ca(2+) may play an important structural role and promote stability of levansucrase. The enzyme concentration is a factor defining the molecular weight (MW) levan distribution. A bimodal distribution is reported at the usual enzyme concentrations. At low concentrations, the enzyme synthesizes high MW levan, and at high concentrations, it synthesizes low MW levan. In terms of biological role, catalyzes the synthesis of levan, a fructose polymer, by transferring the fructosyl moiety from sucrose to a growing acceptor molecule. Also displays sucrose hydrolase activity. At low sucrose concentrations, functions as an hydrolase with water as acceptor, whereas at higher substrate concentrations it adds fructosyl units to a growing levan chain. This chain is Levansucrase, found in Bacillus subtilis (strain 168).